The chain runs to 444 residues: Exopolygalacturonase clone GBGA483 (444 aa).

The signal sequence occupies residues 1–23 (MVGSHKASGVLLVLLVVMATTIA). 5 PbH1 repeats span residues 220–246 (CKNI…HIGR), 247–268 (SNGV…SIGD), 270–290 (TENL…SIGS), 300–321 (VKGV…RIKT), and 330–351 (ASNI…LIDQ). A glycan (N-linked (GlcNAc...) asparagine) is linked at asparagine 222. The active-site Proton donor is aspartate 261. A disulfide bridge links cysteine 263 with cysteine 280. Histidine 284 is a catalytic residue. Residue asparagine 342 is glycosylated (N-linked (GlcNAc...) asparagine). Cystine bridges form between cysteine 391/cysteine 397 and cysteine 420/cysteine 436.

It belongs to the glycosyl hydrolase 28 family.

The protein localises to the secreted. It localises to the cell wall. The enzyme catalyses [(1-&gt;4)-alpha-D-galacturonosyl](n) + H2O = alpha-D-galacturonate + [(1-&gt;4)-alpha-D-galacturonosyl](n-1). Its function is as follows. May function in depolymerizing pectin during pollen development, germination, and tube growth. Acts as an exo-polygalacturonase. The polypeptide is Exopolygalacturonase clone GBGA483 (Arabidopsis thaliana (Mouse-ear cress)).